We begin with the raw amino-acid sequence, 495 residues long: Flagellin (495 aa).

Belongs to the bacterial flagellin family.

Its subcellular location is the secreted. The protein resides in the bacterial flagellum. Functionally, flagellin is the subunit protein which polymerizes to form the filaments of bacterial flagella. The protein is Flagellin (fliC) of Salmonella paratyphi A (strain ATCC 9150 / SARB42).